The chain runs to 68 residues: Large ribosomal subunit protein bL32 (68 aa).

It belongs to the bacterial ribosomal protein bL32 family.

The chain is Large ribosomal subunit protein bL32 from Cereibacter sphaeroides (strain ATCC 17025 / ATH 2.4.3) (Rhodobacter sphaeroides).